A 229-amino-acid chain; its full sequence is 3-isopropylmalate dehydratase small subunit (229 aa).

Residues 198–229 are disordered; it reads LPVKREPEQPIESAREGEYPDWQGPLADRGII. The span at 200-215 shows a compositional bias: basic and acidic residues; it reads VKREPEQPIESAREGE.

It belongs to the LeuD family. LeuD type 1 subfamily. As to quaternary structure, heterodimer of LeuC and LeuD.

The enzyme catalyses (2R,3S)-3-isopropylmalate = (2S)-2-isopropylmalate. It functions in the pathway amino-acid biosynthesis; L-leucine biosynthesis; L-leucine from 3-methyl-2-oxobutanoate: step 2/4. Functionally, catalyzes the isomerization between 2-isopropylmalate and 3-isopropylmalate, via the formation of 2-isopropylmaleate. In Bifidobacterium adolescentis (strain ATCC 15703 / DSM 20083 / NCTC 11814 / E194a), this protein is 3-isopropylmalate dehydratase small subunit.